A 152-amino-acid chain; its full sequence is MSQLCPCGSAVEYSLCCHPYVSGEKVAPDPEHLMRSRYCAFVMQDADYLIKTWHPSCGAAALRAELIAGFAHTEWLGLTVFEHCWQDGGNIGFVSFVARFTEGGKTGAIIERSRFLKENGQWYYIDGTRPQFGRNDPCPCGSGKKFKKCCGQ.

It belongs to the UPF0225 family.

The chain is UPF0225 protein YchJ from Escherichia coli O127:H6 (strain E2348/69 / EPEC).